The following is a 187-amino-acid chain: Ribonuclease HII (187 aa).

The 187-residue stretch at Met1 to Glu187 folds into the RNase H type-2 domain. Residues Asp7, Glu8, and Asp99 each coordinate a divalent metal cation.

It belongs to the RNase HII family. Mn(2+) serves as cofactor. It depends on Mg(2+) as a cofactor.

The protein resides in the cytoplasm. It catalyses the reaction Endonucleolytic cleavage to 5'-phosphomonoester.. Functionally, endonuclease that specifically degrades the RNA of RNA-DNA hybrids. This is Ribonuclease HII from Francisella tularensis subsp. tularensis (strain FSC 198).